Reading from the N-terminus, the 874-residue chain is Oxysterol-binding protein-related protein 5 (874 aa).

The interval 1-71 (MKEEAFLRRR…PQTPGSATKV (71 aa)) is disordered. S12 carries the post-translational modification Phosphoserine. A coiled-coil region spans residues 93 to 123 (VSKKDALKAQKENYRQEKKRATKQLFSALTD). A PH domain is found at 126 to 243 (VVIMADSLKI…WLDALELALR (118 aa)). 2 disordered regions span residues 255-277 (QGRD…GLPT) and 299-338 (FSDK…GPWR). A compositionally biased stretch (polar residues) spans 261–277 (QGSSPDASPSSLYGLPT). The segment covering 299-308 (FSDKSERENA) has biased composition (basic and acidic residues). Residues 383-388 (LSRVVL), 445-448 (KPYN), and 477-478 (HH) each bind a 1,2-diacyl-sn-glycero-3-phospho-(1D-myo-inositol 4-phosphate). Residues 383–388 (LSRVVL) and N448 each bind a 1,2-diacyl-sn-glycero-3-phospho-L-serine. S503 is a binding site for a 1,2-diacyl-sn-glycero-3-phospho-L-serine. Positions 660-684 (GDQHKATQEKSVLEEAQRQRAREHQ) are enriched in basic and acidic residues. 2 disordered regions span residues 660–685 (GDQH…EHQQ) and 739–798 (GQTT…GGES). A 1,2-diacyl-sn-glycero-3-phospho-(1D-myo-inositol 4-phosphate) is bound by residues K669, E673, and R677. Phosphoserine is present on residues S746 and S749. Residues 754 to 764 (PSSDRRLRKAS) show a composition bias toward basic and acidic residues. Residues 765 to 782 (DQPSGHSQVTESSGSTPE) are compositionally biased toward polar residues. The helical transmembrane segment at 855-873 (SWFLLCIFLTCQLFINYIL) threads the bilayer.

The protein belongs to the OSBP family.

The protein localises to the endoplasmic reticulum membrane. Lipid transporter involved in lipid countertransport between the endoplasmic reticulum and the plasma membrane: specifically exchanges phosphatidylserine with phosphatidylinositol 4-phosphate (PI4P), delivering phosphatidylserine to the plasma membrane in exchange for PI4P, which is degraded by the SAC1/SACM1L phosphatase in the endoplasmic reticulum. Binds phosphatidylserine and PI4P in a mutually exclusive manner. May cooperate with NPC1 to mediate the exit of cholesterol from endosomes/lysosomes. Binds 25-hydroxycholesterol and cholesterol. The sequence is that of Oxysterol-binding protein-related protein 5 (Osbpl5) from Mus musculus (Mouse).